A 155-amino-acid chain; its full sequence is Ribosome maturation factor RimP (155 aa).

This sequence belongs to the RimP family.

It is found in the cytoplasm. Its function is as follows. Required for maturation of 30S ribosomal subunits. The polypeptide is Ribosome maturation factor RimP (Listeria monocytogenes serotype 4b (strain CLIP80459)).